We begin with the raw amino-acid sequence, 492 residues long: UDP-N-acetylmuramoyl-L-alanyl-D-glutamate--2,6-diaminopimelate ligase (492 aa).

Residue S30 coordinates UDP-N-acetyl-alpha-D-muramoyl-L-alanyl-D-glutamate. An ATP-binding site is contributed by G114–S120. Residues T156 to T157, S183, Q189, and R191 contribute to the UDP-N-acetyl-alpha-D-muramoyl-L-alanyl-D-glutamate site. K223 carries the N6-carboxylysine modification. Residues R389, D413 to R416, G462, and E466 each bind meso-2,6-diaminopimelate. The Meso-diaminopimelate recognition motif signature appears at D413–R416.

The protein belongs to the MurCDEF family. MurE subfamily. It depends on Mg(2+) as a cofactor. In terms of processing, carboxylation is probably crucial for Mg(2+) binding and, consequently, for the gamma-phosphate positioning of ATP.

The protein localises to the cytoplasm. The enzyme catalyses UDP-N-acetyl-alpha-D-muramoyl-L-alanyl-D-glutamate + meso-2,6-diaminopimelate + ATP = UDP-N-acetyl-alpha-D-muramoyl-L-alanyl-gamma-D-glutamyl-meso-2,6-diaminopimelate + ADP + phosphate + H(+). The protein operates within cell wall biogenesis; peptidoglycan biosynthesis. Its function is as follows. Catalyzes the addition of meso-diaminopimelic acid to the nucleotide precursor UDP-N-acetylmuramoyl-L-alanyl-D-glutamate (UMAG) in the biosynthesis of bacterial cell-wall peptidoglycan. The chain is UDP-N-acetylmuramoyl-L-alanyl-D-glutamate--2,6-diaminopimelate ligase from Neisseria meningitidis serogroup A / serotype 4A (strain DSM 15465 / Z2491).